A 1582-amino-acid chain; its full sequence is Adhesion G protein-coupled receptor B1 (1582 aa).

The N-terminal stretch at 1–33 (MRGQAAAPGPIWILAPLLLLLLLLGRWARAASG) is a signal peptide. Residues 34 to 948 (ADIGPGTEQC…ATMDKVTVPS (915 aa)) are Extracellular-facing. N-linked (GlcNAc...) asparagine glycosylation is present at Asn64. One can recognise a TSP type-1 1 domain in the interval 261–315 (AGGWKLWSLWGECTRDCGGGLQTRTRTCLPTLGVEGGGCEGVLEEGRLCNRKACG). 3 disulfide bridges follow: Cys273-Cys309, Cys277-Cys314, and Cys288-Cys299. The disordered stretch occupies residues 313–335 (ACGPTGRSSSRSQSLRSTDARRR). A compositionally biased stretch (low complexity) spans 319–329 (RSSSRSQSLRS). TSP type-1 domains follow at residues 354–407 (DPAA…AVCP), 409–462 (HGAW…ALCP), 467–520 (DGNW…QQCP), and 522–575 (DGKW…QRCP). 14 disulfide bridges follow: Cys366/Cys400, Cys370/Cys406, Cys381/Cys390, Cys421/Cys456, Cys425/Cys461, Cys436/Cys446, Cys479/Cys514, Cys483/Cys519, Cys494/Cys504, Cys534/Cys569, Cys538/Cys574, Cys549/Cys559, Cys581/Cys616, and Cys604/Cys634. Asn401 is a glycosylation site (N-linked (GlcNAc...) asparagine). N-linked (GlcNAc...) asparagine glycosylation is present at Asn607. The residue at position 609 (Thr609) is a Phosphothreonine. N-linked (GlcNAc...) asparagine glycans are attached at residues Asn692, Asn844, Asn877, and Asn881. Residues 760 to 939 (RDAYQVTDNL…AILAQLSADA (180 aa)) form the GAIN-B domain. Cystine bridges form between Cys884/Cys921 and Cys909/Cys923. The GPS stretch occupies residues 884–939 (CILWDETDGPSSSAPPQLGPWSWRGCRTVPLDALRTRCLCDRLSTFAILAQLSADA). Residues 927-943 (STFAILAQLSADATMDK) are N-terminal stalk following vasculostatin-120 cleavage which is not required for signaling activity. A helical membrane pass occupies residues 949–969 (VTLIVGCGVSSLTLLMLVIIY). The Cytoplasmic segment spans residues 970-980 (VSVWRYIRSER). Residues 981-1001 (SVILINFCLSIISSNALILIG) traverse the membrane as a helical segment. Residues 1002 to 1008 (QTQTRNK) are Extracellular-facing. Residues 1009 to 1029 (VVCTLVAAFLHFFFLSSFCWV) form a helical membrane-spanning segment. Topologically, residues 1030–1052 (LTEAWQSYMAVTGRLRSRLVRKR) are cytoplasmic. The helical transmembrane segment at 1053-1073 (FLCLGWGLPALVVAISVGFTK) threads the bilayer. Over 1074 to 1093 (AKGYSTMNYCWLSLEGGLLY) the chain is Extracellular. The chain crosses the membrane as a helical span at residues 1094 to 1114 (AFVGPAAAVVLVNMVIGILVF). The Cytoplasmic segment spans residues 1115 to 1136 (NKLVSKDGITDKKLKERAGASL). A helical transmembrane segment spans residues 1137 to 1157 (WSSCVVLPLLALTWMSAVLAV). The Extracellular segment spans residues 1158–1166 (TDRRSALFQ). Residues 1167–1187 (ILFAVFDSLEGFVIVMVHCIL) traverse the membrane as a helical segment. Topologically, residues 1188–1582 (RREVQDAVKC…QDIIDLQTEV (395 aa)) are cytoplasmic. Positions 1363–1582 (YSINIDQMPQ…QDIIDLQTEV (220 aa)) are involved in interaction with MAGI1. The tract at residues 1382 to 1549 (PDASFPTRSP…AWVKKELEPL (168 aa)) is disordered. Pro residues predominate over residues 1389 to 1435 (RSPPAREPPGGAPPEVPPVQPPPPPPPPPPPPQQPIPPPPTLEPAPP). The segment covering 1441–1455 (GEPAAHPGPSSGAGA) has biased composition (low complexity). A Phosphoserine modification is found at Ser1467. 2 stretches are compositionally biased toward basic and acidic residues: residues 1468 to 1484 (LERR…EKIM) and 1491 to 1520 (QDMF…KPEK). The tract at residues 1579–1582 (QTEV) is indispensable for interaction with MAGI1.

This sequence belongs to the G-protein coupled receptor 2 family. LN-TM7 subfamily. Interacts with ELMO1 and DOCK1. When bound to ELMO1 and DOCK1, acts as a module to promote apoptotic cell engulfment. Interacts with MDM2; the interaction results in inhibition of MDM2-mediated ubiquitination and degradation of DLG4/PSD95. Interacts with PARD3 and TIAM1; the interaction is required for correct dendritic localization of PARD3 and TIAM1 and for dendritic spine formation. Interacts with MAGI1, MAGI3 and BAIAP2. Interacts with PHYHIP. Interacts with DLG4 (via PDZ domain). Vasculostatin-120: Interacts with CD36. Vasculostatin-120: Interacts with ARRB2. Interacts with BAIAP3; this interaction is direct. In terms of processing, proteolytically cleaved to produce vasculostatin-40 and vasculostatin-120. Vasculostatin-40 is the major form and is produced through proteolytic cleavage by MMP14 between residues 321 and 329 with cleavage likely to be between Ser-326 and Leu-327. Ubiquitinated. In brain, widespread expression in all neuropil-rich zones including spinal cord gray matter, cerebellar molecular layer, cerebral cortex, thalamic nuclei and basal ganglia with no expression in white matter (at protein level). In the cerebellar molecular layer, highly expressed in interneuron processes whereas Purkinje cells and their dendrites show weaker expression (at protein level). In the olfactory bulb, highly expressed in glomeruli (at protein level). In the retina, highly concentrated in the outer and inner plexiform layers (at protein level). Expressed in brain. Enriched in hippocampus and cortex. Also detected in other tissues including bone marrow and spleen.

It localises to the cell membrane. The protein localises to the cell projection. It is found in the phagocytic cup. Its subcellular location is the cell junction. The protein resides in the focal adhesion. It localises to the dendritic spine. The protein localises to the postsynaptic density. It is found in the secreted. In terms of biological role, phosphatidylserine receptor which enhances the engulfment of apoptotic cells. Also mediates the binding and engulfment of Gram-negative bacteria. Stimulates production of reactive oxygen species by macrophages in response to Gram-negative bacteria, resulting in enhanced microbicidal macrophage activity. In the gastric mucosa, required for recognition and engulfment of apoptotic gastric epithelial cells. Promotes myoblast fusion. Activates the Rho pathway in a G-protein-dependent manner. Inhibits MDM2-mediated ubiquitination and degradation of DLG4/PSD95, promoting DLG4 stability and regulating synaptic plasticity. Required for the formation of dendritic spines by ensuring the correct localization of PARD3 and TIAM1. Potent inhibitor of angiogenesis in brain and may play a significant role as a mediator of the p53/TP53 signal in suppression of glioblastoma. Inhibits angiogenesis in a CD36-dependent manner. Functionally, inhibits angiogenesis. The polypeptide is Adhesion G protein-coupled receptor B1 (Mus musculus (Mouse)).